A 340-amino-acid polypeptide reads, in one-letter code: Holliday junction branch migration complex subunit RuvB (340 aa).

The segment at 4–184 is large ATPase domain (RuvB-L); the sequence is TDRIVGGQSL…FGIVQRLEFY (181 aa). Residues arginine 24, glycine 65, lysine 68, threonine 69, threonine 70, 131–133, arginine 174, tyrosine 184, and arginine 221 contribute to the ATP site; that span reads EDF. Threonine 69 is a binding site for Mg(2+). Positions 185-255 are small ATPAse domain (RuvB-S); that stretch reads SIEELAQIVT…IADLALNLLE (71 aa). Residues 258-340 form a head domain (RuvB-H) region; it reads PLGLDKMDRR…TMPERNLEDE (83 aa). The DNA site is built by arginine 294, arginine 313, and arginine 318.

Belongs to the RuvB family. In terms of assembly, homohexamer. Forms an RuvA(8)-RuvB(12)-Holliday junction (HJ) complex. HJ DNA is sandwiched between 2 RuvA tetramers; dsDNA enters through RuvA and exits via RuvB. An RuvB hexamer assembles on each DNA strand where it exits the tetramer. Each RuvB hexamer is contacted by two RuvA subunits (via domain III) on 2 adjacent RuvB subunits; this complex drives branch migration. In the full resolvosome a probable DNA-RuvA(4)-RuvB(12)-RuvC(2) complex forms which resolves the HJ.

Its subcellular location is the cytoplasm. It catalyses the reaction ATP + H2O = ADP + phosphate + H(+). The RuvA-RuvB-RuvC complex processes Holliday junction (HJ) DNA during genetic recombination and DNA repair, while the RuvA-RuvB complex plays an important role in the rescue of blocked DNA replication forks via replication fork reversal (RFR). RuvA specifically binds to HJ cruciform DNA, conferring on it an open structure. The RuvB hexamer acts as an ATP-dependent pump, pulling dsDNA into and through the RuvAB complex. RuvB forms 2 homohexamers on either side of HJ DNA bound by 1 or 2 RuvA tetramers; 4 subunits per hexamer contact DNA at a time. Coordinated motions by a converter formed by DNA-disengaged RuvB subunits stimulates ATP hydrolysis and nucleotide exchange. Immobilization of the converter enables RuvB to convert the ATP-contained energy into a lever motion, pulling 2 nucleotides of DNA out of the RuvA tetramer per ATP hydrolyzed, thus driving DNA branch migration. The RuvB motors rotate together with the DNA substrate, which together with the progressing nucleotide cycle form the mechanistic basis for DNA recombination by continuous HJ branch migration. Branch migration allows RuvC to scan DNA until it finds its consensus sequence, where it cleaves and resolves cruciform DNA. This is Holliday junction branch migration complex subunit RuvB from Hydrogenovibrio crunogenus (strain DSM 25203 / XCL-2) (Thiomicrospira crunogena).